Here is a 361-residue protein sequence, read N- to C-terminus: Serine/threonine-protein kinase SRK2B (361 aa).

One can recognise a Protein kinase domain in the interval 4 to 260; that stretch reads YELVKDIGAG…IGDIKKHPWF (257 aa). ATP-binding positions include 10–18 and Lys-33; that span reads IGAGNFGVA. Asp-123 (proton acceptor) is an active-site residue. Residue Ser-154 is modified to Phosphoserine. The segment at 311-361 is disordered; sequence AFGWGGGEDAEGKEEDAEEEVEEVEEEEDEEDEYDKTVKQVHASMGEVRVS. Over residues 318-344 the composition is skewed to acidic residues; that stretch reads EDAEGKEEDAEEEVEEVEEEEDEEDEY.

Belongs to the protein kinase superfamily. Ser/Thr protein kinase family. As to expression, expressed in seedlings.

The catalysed reaction is L-seryl-[protein] + ATP = O-phospho-L-seryl-[protein] + ADP + H(+). The enzyme catalyses L-threonyl-[protein] + ATP = O-phospho-L-threonyl-[protein] + ADP + H(+). This Arabidopsis thaliana (Mouse-ear cress) protein is Serine/threonine-protein kinase SRK2B (SRK2B).